The chain runs to 248 residues: Putative homeobox-leucine zipper protein HOX26 (248 aa).

A disordered region spans residues 50–118; sequence KKVAAAAVVA…GDEEGASRKK (69 aa). Over residues 79–89 the composition is skewed to basic residues; it reads RQRRSCKKGRR. The homeobox DNA-binding region spans 114–173; the sequence is ASRKKLRLTGEQATLLEDSFRAHNILSHAEKQELAGKLGLSARQVEVWFQNRRARTKLKQ. The leucine-zipper stretch occupies residues 172 to 216; sequence KQTEADCDLLRRWCDHLAADNARLRRDLAELRRSSSSPPVSGLAV.

This sequence belongs to the HD-ZIP homeobox family. Class II subfamily.

It is found in the nucleus. Probable transcription factor. This Oryza sativa subsp. japonica (Rice) protein is Putative homeobox-leucine zipper protein HOX26 (HOX26).